The sequence spans 380 residues: Chaperone protein DnaJ (380 aa).

One can recognise a J domain in the interval 5–70 (DFYETLGVSK…QKRAAYDRFG (66 aa)). Residues 141–219 (GKTAQIRVPT…CHGQGRVTEE (79 aa)) form a CR-type zinc finger. The Zn(2+) site is built by Cys154, Cys157, Cys171, Cys174, Cys193, Cys196, Cys207, and Cys210. 4 CXXCXGXG motif repeats span residues 154 to 161 (CEVCSGSG), 171 to 178 (CATCQGSG), 193 to 200 (CPTCQGRG), and 207 to 214 (CGKCHGQG).

The protein belongs to the DnaJ family. In terms of assembly, homodimer. Requires Zn(2+) as cofactor.

It localises to the cytoplasm. In terms of biological role, participates actively in the response to hyperosmotic and heat shock by preventing the aggregation of stress-denatured proteins and by disaggregating proteins, also in an autonomous, DnaK-independent fashion. Unfolded proteins bind initially to DnaJ; upon interaction with the DnaJ-bound protein, DnaK hydrolyzes its bound ATP, resulting in the formation of a stable complex. GrpE releases ADP from DnaK; ATP binding to DnaK triggers the release of the substrate protein, thus completing the reaction cycle. Several rounds of ATP-dependent interactions between DnaJ, DnaK and GrpE are required for fully efficient folding. Also involved, together with DnaK and GrpE, in the DNA replication of plasmids through activation of initiation proteins. The chain is Chaperone protein DnaJ from Allorhizobium ampelinum (strain ATCC BAA-846 / DSM 112012 / S4) (Agrobacterium vitis (strain S4)).